Reading from the N-terminus, the 401-residue chain is Glutamyl-tRNA reductase (401 aa).

Residues 45 to 48 (TCNR), Ser-101, 106 to 108 (EDQ), and Gln-112 contribute to the substrate site. Catalysis depends on Cys-46, which acts as the Nucleophile. 177–182 (GYGEVG) is a binding site for NADP(+).

The protein belongs to the glutamyl-tRNA reductase family. As to quaternary structure, homodimer.

It catalyses the reaction (S)-4-amino-5-oxopentanoate + tRNA(Glu) + NADP(+) = L-glutamyl-tRNA(Glu) + NADPH + H(+). The protein operates within porphyrin-containing compound metabolism; protoporphyrin-IX biosynthesis; 5-aminolevulinate from L-glutamyl-tRNA(Glu): step 1/2. Its function is as follows. Catalyzes the NADPH-dependent reduction of glutamyl-tRNA(Glu) to glutamate 1-semialdehyde (GSA). This Clostridium beijerinckii (strain ATCC 51743 / NCIMB 8052) (Clostridium acetobutylicum) protein is Glutamyl-tRNA reductase.